The sequence spans 449 residues: Tubulin beta-2 chain (449 aa).

Q11 and E69 together coordinate GTP. Residue E69 participates in Mg(2+) binding. H137 bears the Methylhistidine mark. S138, G142, T143, G144, N204, and N226 together coordinate GTP.

It belongs to the tubulin family. In terms of assembly, dimer of alpha and beta chains. A typical microtubule is a hollow water-filled tube with an outer diameter of 25 nm and an inner diameter of 15 nM. Alpha-beta heterodimers associate head-to-tail to form protofilaments running lengthwise along the microtubule wall with the beta-tubulin subunit facing the microtubule plus end conferring a structural polarity. Microtubules usually have 13 protofilaments but different protofilament numbers can be found in some organisms and specialized cells. Mg(2+) is required as a cofactor.

It localises to the cytoplasm. The protein localises to the cytoskeleton. In terms of biological role, tubulin is the major constituent of microtubules, a cylinder consisting of laterally associated linear protofilaments composed of alpha- and beta-tubulin heterodimers. Microtubules grow by the addition of GTP-tubulin dimers to the microtubule end, where a stabilizing cap forms. Below the cap, tubulin dimers are in GDP-bound state, owing to GTPase activity of alpha-tubulin. The chain is Tubulin beta-2 chain (tubC) from Emericella nidulans (strain FGSC A4 / ATCC 38163 / CBS 112.46 / NRRL 194 / M139) (Aspergillus nidulans).